The following is a 244-amino-acid chain: Derlin-2.2 (244 aa).

Topologically, residues methionine 1–threonine 21 are cytoplasmic. Residues alanine 22–leucine 42 traverse the membrane as a helical segment. Residues asparagine 43–phenylalanine 96 are Lumenal-facing. The chain crosses the membrane as a helical span at residues leucine 97–isoleucine 117. At proline 118–serine 121 the chain is on the cytoplasmic side. A helical membrane pass occupies residues alanine 122 to tryptophan 142. The Lumenal portion of the chain corresponds to serine 143–serine 152. Residues phenylalanine 153–isoleucine 173 form a helical membrane-spanning segment. At leucine 174–aspartate 244 the chain is on the cytoplasmic side.

This sequence belongs to the derlin family.

It localises to the endoplasmic reticulum membrane. May be involved in the degradation process of specific misfolded endoplasmic reticulum (ER) luminal proteins. This Arabidopsis thaliana (Mouse-ear cress) protein is Derlin-2.2 (DER2.2).